Consider the following 338-residue polypeptide: MKVFYDKDADLSLIKGKNVTIIGYGSQGHAHALNLNDSGVKVTVGLRKNGASWNKAVNAGLQVKEVAEAVKDADVVMILLPDEQIADVYKNEVHGNIKQGAALAFAHGFNVHYGAVIPRADLDVIMVAPKAPGHTVRGTYAQGGGVPHLIAVHQDKSGSARDIALSYATANGGGRAGIIETNFREETETDLFGEQAVLCGGTVELIKAGFETLVEAGYAPEMAYFECLHELKLIVDLIYEGGIGNMNYSISNNAEYGEYVTGPRVVTAETKQAMKQCLHDIQTGEYAKSFLLENKAGAPTLISRRRLTADHQIEQVGAKLRAMMPWIAKNKLVDQSKN.

Positions 1 to 181 (MKVFYDKDAD…GGGRAGIIET (181 aa)) constitute a KARI N-terminal Rossmann domain. Residues 24 to 27 (YGSQ), R47, and S52 contribute to the NADP(+) site. The active site involves H107. G133 contributes to the NADP(+) binding site. One can recognise a KARI C-terminal knotted domain in the interval 182–327 (NFREETETDL…AKLRAMMPWI (146 aa)). 4 residues coordinate Mg(2+): D190, E194, E226, and E230. S251 lines the substrate pocket.

This sequence belongs to the ketol-acid reductoisomerase family. Mg(2+) is required as a cofactor.

It catalyses the reaction (2R)-2,3-dihydroxy-3-methylbutanoate + NADP(+) = (2S)-2-acetolactate + NADPH + H(+). The enzyme catalyses (2R,3R)-2,3-dihydroxy-3-methylpentanoate + NADP(+) = (S)-2-ethyl-2-hydroxy-3-oxobutanoate + NADPH + H(+). Its pathway is amino-acid biosynthesis; L-isoleucine biosynthesis; L-isoleucine from 2-oxobutanoate: step 2/4. It functions in the pathway amino-acid biosynthesis; L-valine biosynthesis; L-valine from pyruvate: step 2/4. Its function is as follows. Involved in the biosynthesis of branched-chain amino acids (BCAA). Catalyzes an alkyl-migration followed by a ketol-acid reduction of (S)-2-acetolactate (S2AL) to yield (R)-2,3-dihydroxy-isovalerate. In the isomerase reaction, S2AL is rearranged via a Mg-dependent methyl migration to produce 3-hydroxy-3-methyl-2-ketobutyrate (HMKB). In the reductase reaction, this 2-ketoacid undergoes a metal-dependent reduction by NADPH to yield (R)-2,3-dihydroxy-isovalerate. This is Ketol-acid reductoisomerase (NADP(+)) from Ralstonia nicotianae (strain ATCC BAA-1114 / GMI1000) (Ralstonia solanacearum).